The following is a 185-amino-acid chain: Superoxide dismutase [Cu-Zn] (185 aa).

The first 18 residues, 1–18, serve as a signal peptide directing secretion; it reads MTAFYKLCGMSMLSLVLA. Residues H85, H87, and H102 each coordinate Cu cation. An intrachain disulfide couples C92 to C180. Positions 102, 111, 120, and 123 each coordinate Zn(2+). H158 is a Cu cation binding site.

The protein belongs to the Cu-Zn superoxide dismutase family. As to quaternary structure, homodimer. Requires Cu cation as cofactor. It depends on Zn(2+) as a cofactor.

Its subcellular location is the periplasm. The catalysed reaction is 2 superoxide + 2 H(+) = H2O2 + O2. Destroys radicals which are normally produced within the cells and which are toxic to biological systems. In Francisella tularensis subsp. holarctica (strain LVS), this protein is Superoxide dismutase [Cu-Zn] (sodC).